The following is a 1049-amino-acid chain: Vacuolar membrane protease (1049 aa).

Over Met1–Pro11 the chain is Cytoplasmic. A helical membrane pass occupies residues Met12–Ile32. Topologically, residues Gln33–Thr438 are vacuolar. Residue Asn50 is glycosylated (N-linked (GlcNAc...) asparagine). Residues Asp114–Tyr135 form a disordered region. A glycan (N-linked (GlcNAc...) asparagine) is linked at Asn157. Zn(2+) is bound by residues His221 and Asp233. Residue Glu267 is the Proton acceptor of the active site. Zn(2+) is bound by residues Glu268, Glu293, and His365. Residues Leu439–Tyr459 form a helical membrane-spanning segment. Topologically, residues Leu460–Tyr495 are cytoplasmic. Residues Pro496–Ile516 form a helical membrane-spanning segment. Residues Asn517–Tyr526 lie on the Vacuolar side of the membrane. Residues Ser527–Cys547 form a helical membrane-spanning segment. The Cytoplasmic portion of the chain corresponds to Asn548 to Arg557. Residues Gly558–Tyr578 form a helical membrane-spanning segment. Residues Glu579–Ser585 lie on the Vacuolar side of the membrane. Residues Gly586 to Gly606 traverse the membrane as a helical segment. Residues Glu607–Tyr740 are Cytoplasmic-facing. A disordered region spans residues Ser621–Ser686. A compositionally biased stretch (basic and acidic residues) spans Gln622–His633. Residues Gly655–Val664 show a composition bias toward acidic residues. The helical transmembrane segment at Leu741–Ala761 threads the bilayer. Residues Leu762–Leu773 are Vacuolar-facing. A helical membrane pass occupies residues Leu774–Ile794. The Cytoplasmic segment spans residues His795–Met801. A helical membrane pass occupies residues Pro802–Phe822. At Ser823 to Val1049 the chain is on the vacuolar side. Asn914 carries N-linked (GlcNAc...) asparagine glycosylation.

The protein belongs to the peptidase M28 family. The cofactor is Zn(2+).

It is found in the vacuole membrane. Its function is as follows. May be involved in vacuolar sorting and osmoregulation. The chain is Vacuolar membrane protease from Botryotinia fuckeliana (strain B05.10) (Noble rot fungus).